Consider the following 267-residue polypeptide: Hydroxyacylglutathione hydrolase (267 aa).

Zn(2+) is bound by residues histidine 55, histidine 57, aspartate 59, histidine 60, histidine 121, aspartate 138, and histidine 176.

Belongs to the metallo-beta-lactamase superfamily. Glyoxalase II family. As to quaternary structure, monomer. Zn(2+) is required as a cofactor.

The catalysed reaction is an S-(2-hydroxyacyl)glutathione + H2O = a 2-hydroxy carboxylate + glutathione + H(+). Its pathway is secondary metabolite metabolism; methylglyoxal degradation; (R)-lactate from methylglyoxal: step 2/2. In terms of biological role, thiolesterase that catalyzes the hydrolysis of S-D-lactoyl-glutathione to form glutathione and D-lactic acid. The sequence is that of Hydroxyacylglutathione hydrolase from Shewanella oneidensis (strain ATCC 700550 / JCM 31522 / CIP 106686 / LMG 19005 / NCIMB 14063 / MR-1).